The chain runs to 705 residues: Methionine--tRNA ligase (705 aa).

The 'HIGH' region signature appears at 17–27 (PYANGPVHLGH). Zn(2+) contacts are provided by cysteine 149, cysteine 152, cysteine 162, and cysteine 165. The short motif at 347–351 (KFSKS) is the 'KMSKS' region element. Lysine 350 serves as a coordination point for ATP. Residues 604-705 (EFQKVDLRVA…GEGINGQSVQ (102 aa)) form the tRNA-binding domain.

This sequence belongs to the class-I aminoacyl-tRNA synthetase family. MetG type 1 subfamily. As to quaternary structure, homodimer. The cofactor is Zn(2+).

It is found in the cytoplasm. It catalyses the reaction tRNA(Met) + L-methionine + ATP = L-methionyl-tRNA(Met) + AMP + diphosphate. Is required not only for elongation of protein synthesis but also for the initiation of all mRNA translation through initiator tRNA(fMet) aminoacylation. In Chlorobium chlorochromatii (strain CaD3), this protein is Methionine--tRNA ligase.